A 635-amino-acid chain; its full sequence is 1-deoxy-D-xylulose-5-phosphate synthase (635 aa).

Residues His-73 and 114–116 (SHA) contribute to the thiamine diphosphate site. Asp-146 contacts Mg(2+). Thiamine diphosphate is bound by residues 147 to 148 (GA), Asn-176, Tyr-287, and Glu-368. Asn-176 contacts Mg(2+).

The protein belongs to the transketolase family. DXPS subfamily. As to quaternary structure, homodimer. It depends on Mg(2+) as a cofactor. The cofactor is thiamine diphosphate.

It carries out the reaction D-glyceraldehyde 3-phosphate + pyruvate + H(+) = 1-deoxy-D-xylulose 5-phosphate + CO2. Its pathway is metabolic intermediate biosynthesis; 1-deoxy-D-xylulose 5-phosphate biosynthesis; 1-deoxy-D-xylulose 5-phosphate from D-glyceraldehyde 3-phosphate and pyruvate: step 1/1. Catalyzes the acyloin condensation reaction between C atoms 2 and 3 of pyruvate and glyceraldehyde 3-phosphate to yield 1-deoxy-D-xylulose-5-phosphate (DXP). This chain is 1-deoxy-D-xylulose-5-phosphate synthase, found in Corynebacterium diphtheriae (strain ATCC 700971 / NCTC 13129 / Biotype gravis).